The sequence spans 397 residues: Lysosomal acid lipase/cholesteryl ester hydrolase (397 aa).

The first 25 residues, Met1–Ser25, serve as a signal peptide directing secretion. Residues Ala26–Lys72 constitute a propeptide, removed in mature form. 3 N-linked (GlcNAc...) asparagine glycosylation sites follow: Asn34, Asn99, and Asn159. One can recognise an AB hydrolase-1 domain in the interval His84–Gly378. The active-site Charge relay system is Ser172. Residues Asn271 and Asn319 are each glycosylated (N-linked (GlcNAc...) asparagine). The active-site Charge relay system is His372.

Belongs to the AB hydrolase superfamily. Lipase family. In terms of assembly, monomer. Post-translationally, glycosylation is not essential for catalytic activity.

Its subcellular location is the lysosome. It catalyses the reaction a sterol ester + H2O = a sterol + a fatty acid + H(+). The enzyme catalyses cholesteryl (9Z-octadecenoate) + H2O = cholesterol + (9Z)-octadecenoate + H(+). The catalysed reaction is a triacylglycerol + H2O = a 1,2-diacylglycerol + a fatty acid + H(+). It carries out the reaction 1,2-di-(9Z-octadecenoyl)-glycerol + (9Z)-octadecenoate + H(+) = 1,2,3-tri-(9Z-octadecenoyl)-glycerol + H2O. It catalyses the reaction a 1,2-diacylglycerol + H2O = a 1-acylglycerol + a fatty acid + H(+). The enzyme catalyses 1,2-di-(9Z-octadecenoyl)-glycerol + H2O = 1-(9Z-octadecenoyl)-glycerol + (9Z)-octadecenoate + H(+). The catalysed reaction is a 1,3-diacylglycerol + H2O = a 1-acylglycerol + a fatty acid + H(+). It carries out the reaction 1,3-di-(9Z-octadecenoyl)-glycerol + H2O = 1-(9Z-octadecenoyl)-glycerol + (9Z)-octadecenoate + H(+). Catalyzes the deacylation of cholesteryl ester core lipids of endocytosed low density lipoproteins to generate free fatty acids and cholesterol. Hydrolyzes triglycerides (1,2,3-triacylglycerol) and diglycerides (such as 1,2-diacylglycerol and 1,3-diacylglycerol) with preference for the acyl moieties at the sn-1 or sn-3 positions. The polypeptide is Lysosomal acid lipase/cholesteryl ester hydrolase (Lipa) (Rattus norvegicus (Rat)).